The chain runs to 168 residues: MAPKAVLVGPPGAGKSTIGRRLAQALDLPLFDTDVAVEEEAGRTIAEIFVQEGEPAFRALEEEIVRKAIESHEGIVSLGGGSILSERTRELLKGHTVIYLEISVAEGLKRTGTNTARPLLAGGDPRQKYTELMRKRRPLYRQVASIRIRTDGRSPARVVQQLVAKLAE.

Gly-12 to Thr-17 provides a ligand contact to ATP. Ser-16 contacts Mg(2+). Substrate contacts are provided by Asp-34, Arg-58, and Gly-80. Arg-117 serves as a coordination point for ATP. Arg-136 provides a ligand contact to substrate. Arg-153 serves as a coordination point for ATP.

It belongs to the shikimate kinase family. Monomer. It depends on Mg(2+) as a cofactor.

It is found in the cytoplasm. The enzyme catalyses shikimate + ATP = 3-phosphoshikimate + ADP + H(+). It participates in metabolic intermediate biosynthesis; chorismate biosynthesis; chorismate from D-erythrose 4-phosphate and phosphoenolpyruvate: step 5/7. In terms of biological role, catalyzes the specific phosphorylation of the 3-hydroxyl group of shikimic acid using ATP as a cosubstrate. The polypeptide is Shikimate kinase (Rhodococcus jostii (strain RHA1)).